A 363-amino-acid polypeptide reads, in one-letter code: MNRIQRVSSWLKEAGHTAAFIHTKENVFYLTGFYTEPHERLMGLFIFQEEEPFFVCPGMEAGQARNAGWNHEIIGYADHENPWELIEKALKKRNISIHMLAVEKDSISLSRAEQLKHATGGAQFVSAEETLNQFRLIKDDNEIRLLKEAAKLADYGVEVGTAALREGISEVEVLAQIEYELKKKGIQGMSFSTMVLFGEKSGQPHGNPGTATLKKGDFVLFDLGVILDGYCSDITRTFAYKTINPKQEAIYETVLQAEKAAIEASKPGVRIGDLDLTARGIIEKAGYGDYFPHRLGHGLGISVHEYPSMSQANDTLLQEGMVYTIEPGIYVPEIGGVRIEDDVHVTKDGAVALTQYPKDLIIL.

Residues Asp-222, Asp-233, His-297, Glu-326, and Glu-340 each coordinate Mn(2+).

This sequence belongs to the peptidase M24B family. Requires Mn(2+) as cofactor.

The protein is Putative dipeptidase YkvY (ykvY) of Bacillus subtilis (strain 168).